Here is a 372-residue protein sequence, read N- to C-terminus: Glutamate 5-kinase (372 aa).

An ATP-binding site is contributed by lysine 14. 3 residues coordinate substrate: serine 54, aspartate 141, and asparagine 153. 173–174 lines the ATP pocket; the sequence is TD. The PUA domain occupies 280-358; that stretch reads RGHVVIDDGA…GEIESVLGYM (79 aa).

The protein belongs to the glutamate 5-kinase family.

It is found in the cytoplasm. It carries out the reaction L-glutamate + ATP = L-glutamyl 5-phosphate + ADP. The protein operates within amino-acid biosynthesis; L-proline biosynthesis; L-glutamate 5-semialdehyde from L-glutamate: step 1/2. Catalyzes the transfer of a phosphate group to glutamate to form L-glutamate 5-phosphate. This is Glutamate 5-kinase from Paraburkholderia phytofirmans (strain DSM 17436 / LMG 22146 / PsJN) (Burkholderia phytofirmans).